The chain runs to 118 residues: Vesicle-associated membrane protein 1 (118 aa).

The disordered stretch occupies residues 1-36; that stretch reads MSAPAQPPAEGTEGTAPGGGPPGPPPNMTSNRRLQQ. Residues 1–96 are Cytoplasmic-facing; that stretch reads MSAPAQPPAE…KRKYWWKNCK (96 aa). Positions 33–93 constitute a v-SNARE coiled-coil homology domain; the sequence is RLQQTQAQVE…AKLKRKYWWK (61 aa). The residue at position 63 (S63) is a Phosphoserine. Residues 97 to 116 form a helical; Anchor for type IV membrane protein membrane-spanning segment; the sequence is MMIMLGAICAIIVVVIVIYF. The Vesicular segment spans residues 117 to 118; the sequence is FT.

Belongs to the synaptobrevin family. Interacts with VAPA and VAPB. (Microbial infection) Targeted and hydrolyzed by C.botulinum neurotoxin type B (BoNT/B, botB) which probably hydrolyzes the 78-Gln-|-Phe-79 bond and inhibits neurotransmitter release. Post-translationally, (Microbial infection) Targeted and hydrolyzed by C.botulinum neurotoxin type D (BoNT/D, botD) which probably hydrolyzes the 61-Arg-|-Leu-62 bond and inhibits neurotransmitter release. BoNT/D has low catalytic activity on this protein due to its sequence. Note that humans are not known to be infected by C.botulinum type D. In terms of processing, (Microbial infection) Targeted and hydrolyzed by C.botulinum neurotoxin type F (BoNT/F, botF) which probably hydrolyzes the 60-Gln-|-Lys-61 bond and inhibits neurotransmitter release. (Microbial infection) Targeted and hydrolyzed by C.botulinum neurotoxin type X (BoNT/X) which probably hydrolyzes the 68-Arg-|-Ala-69 bond and inhibits neurotransmitter release. It remains unknown whether BoNT/X is ever produced, or what organisms it targets. In terms of tissue distribution, nervous system, skeletal muscle and adipose tissue.

The protein resides in the cytoplasmic vesicle. Its subcellular location is the secretory vesicle. It localises to the synaptic vesicle membrane. The protein localises to the synapse. It is found in the synaptosome. The protein resides in the cytoplasmic vesicle membrane. Its subcellular location is the mitochondrion outer membrane. In terms of biological role, involved in the targeting and/or fusion of transport vesicles to their target membrane. The polypeptide is Vesicle-associated membrane protein 1 (VAMP1) (Homo sapiens (Human)).